The primary structure comprises 299 residues: Lipoyl synthase 2 (299 aa).

Residues Cys-45, Cys-50, Cys-56, Cys-71, Cys-75, Cys-78, and Ser-295 each coordinate [4Fe-4S] cluster. The 228-residue stretch at Tyr-57–Lys-284 folds into the Radical SAM core domain.

Belongs to the radical SAM superfamily. Lipoyl synthase family. Requires [4Fe-4S] cluster as cofactor.

It is found in the cytoplasm. The catalysed reaction is [[Fe-S] cluster scaffold protein carrying a second [4Fe-4S](2+) cluster] + N(6)-octanoyl-L-lysyl-[protein] + 2 oxidized [2Fe-2S]-[ferredoxin] + 2 S-adenosyl-L-methionine + 4 H(+) = [[Fe-S] cluster scaffold protein] + N(6)-[(R)-dihydrolipoyl]-L-lysyl-[protein] + 4 Fe(3+) + 2 hydrogen sulfide + 2 5'-deoxyadenosine + 2 L-methionine + 2 reduced [2Fe-2S]-[ferredoxin]. Its pathway is protein modification; protein lipoylation via endogenous pathway; protein N(6)-(lipoyl)lysine from octanoyl-[acyl-carrier-protein]: step 2/2. Its function is as follows. Catalyzes the radical-mediated insertion of two sulfur atoms into the C-6 and C-8 positions of the octanoyl moiety bound to the lipoyl domains of lipoate-dependent enzymes, thereby converting the octanoylated domains into lipoylated derivatives. This Prochlorococcus marinus subsp. pastoris (strain CCMP1986 / NIES-2087 / MED4) protein is Lipoyl synthase 2.